The following is a 445-amino-acid chain: Methionine aminopeptidase 2 (445 aa).

Residues 1-89 (MAAQAPVDEI…DPPRVLISQL (89 aa)) form a disordered region. Residues 60 to 74 (AKKKKKRKPKKKKKN) are compositionally biased toward basic residues. His198 lines the substrate pocket. A divalent metal cation is bound by residues Asp218, Asp229, and His298. His306 lines the substrate pocket. A divalent metal cation-binding residues include Glu331 and Glu426.

This sequence belongs to the peptidase M24A family. Methionine aminopeptidase eukaryotic type 2 subfamily. Co(2+) is required as a cofactor. The cofactor is Zn(2+). Mn(2+) serves as cofactor. Requires Fe(2+) as cofactor.

It localises to the cytoplasm. It catalyses the reaction Release of N-terminal amino acids, preferentially methionine, from peptides and arylamides.. Functionally, cotranslationally removes the N-terminal methionine from nascent proteins. The N-terminal methionine is often cleaved when the second residue in the primary sequence is small and uncharged (Met-Ala-, Cys, Gly, Pro, Ser, Thr, or Val). The chain is Methionine aminopeptidase 2 from Podospora anserina (strain S / ATCC MYA-4624 / DSM 980 / FGSC 10383) (Pleurage anserina).